The primary structure comprises 273 residues: Large ribosomal subunit protein uL2 (273 aa).

Residues 221-263 form a disordered region; it reads RGTAMNPVDHPHGGGEGRNFGKHPVTPWGVQTKGKKTRHNKRT. Over residues 253–263 the composition is skewed to basic residues; that stretch reads KGKKTRHNKRT.

It belongs to the universal ribosomal protein uL2 family. Part of the 50S ribosomal subunit. Forms a bridge to the 30S subunit in the 70S ribosome.

Functionally, one of the primary rRNA binding proteins. Required for association of the 30S and 50S subunits to form the 70S ribosome, for tRNA binding and peptide bond formation. It has been suggested to have peptidyltransferase activity; this is somewhat controversial. Makes several contacts with the 16S rRNA in the 70S ribosome. In Histophilus somni (strain 2336) (Haemophilus somnus), this protein is Large ribosomal subunit protein uL2.